Here is a 438-residue protein sequence, read N- to C-terminus: MRMPSAISIGVFAGLSLAASAVPSLRKNGTTCTVIPLGNGQDDVPNILSAVDECGQTSGGRVVLPAPYTYRINQRMTTHLTDSRLEIGGTLLFSDDIDYWVNNSYRVDFQNQSSAWRITGHDYVVDGGPHRGGVDGNGQLWYTWAKGGSNVFGRPMPVHVFESTRATLRNLAIRQPQFWAVLVDSSSHINLDNFYVNATNHDSSVSPEGEWVQNTDGIDTYRSDHITITNWVYQGGDDAVAFKGNSTNIHVENVTVYGGPGIAFGSLGQYPDRTDIVENVTVRNVRVQPSFQRAMNSGVYFKSWIGVNYGVPPNGGGGGHGYVRNVSVENLRLKDVQLPVYIDTCLSYLFSENITQYCDTSTYEFEDLHFRNISGNGLATVTDYPGKNISFAVALLCSEKAPCTDLTFQDISITLPGNYTGKHVLCENAEVEGLPCNS.

The N-terminal stretch at 1-21 (MRMPSAISIGVFAGLSLAASA) is a signal peptide. 4 N-linked (GlcNAc...) asparagine glycosylation sites follow: asparagine 28, asparagine 102, asparagine 111, and asparagine 197. 2 PbH1 repeats span residues 186–222 (SSHI…DTYR) and 223–244 (SDHI…AFKG). Aspartate 237 serves as the catalytic Proton donor. N-linked (GlcNAc...) asparagine glycosylation is found at asparagine 245, asparagine 253, asparagine 279, asparagine 325, asparagine 353, asparagine 372, and asparagine 388. PbH1 repeat units follow at residues 246 to 266 (STNI…AFGS), 277 to 303 (VENV…YFKS), and 323 to 344 (VRNV…YIDT). A disulfide bond links cysteine 397 and cysteine 403. Asparagine 418 carries an N-linked (GlcNAc...) asparagine glycan.

The protein belongs to the glycosyl hydrolase 28 family.

It localises to the secreted. It carries out the reaction [(1-&gt;4)-alpha-D-galacturonosyl](n) + H2O = alpha-D-galacturonate + [(1-&gt;4)-alpha-D-galacturonosyl](n-1). Its function is as follows. Specific in hydrolyzing the terminal glycosidic bond of polygalacturonic acid and oligogalacturonates. This chain is Putative galacturan 1,4-alpha-galacturonidase A (rgxA), found in Aspergillus niger.